Reading from the N-terminus, the 146-residue chain is uncharacterized protein (146 aa).

This is an uncharacterized protein from Arabidopsis thaliana (Mouse-ear cress).